An 87-amino-acid polypeptide reads, in one-letter code: Large ribosomal subunit protein bL31B (87 aa).

Belongs to the bacterial ribosomal protein bL31 family. Type B subfamily. In terms of assembly, part of the 50S ribosomal subunit.

This Pseudomonas paraeruginosa (strain DSM 24068 / PA7) (Pseudomonas aeruginosa (strain PA7)) protein is Large ribosomal subunit protein bL31B.